Reading from the N-terminus, the 963-residue chain is MDEQALLGLNPNADSDFRQRALAYFEQLKISPDAWQVCAEALAQKTYSDDHVKFFCFQVLEHQVKYKYSELSTAQQQLIRETLLSWLQAQMQNPQPEKTFIRNKAAQVFALLFVTEYLTKWPKFFFDILSVVDLNPRGVDLYLRILMAIDSELVDRDVVHTSEASGLENTLIKDTMREQCIPNLVESWYQILHNYQYTNSEVLCQCLEVVGAYVSWIDLSLIANDRFINMLLGHMSVEVLREEACDCLFEIVNKGMDPVDKMKLVESLCQVLQTAGFFSIDQEEDLDFVARFSKLVNGMGQSLIVSWTKLIKNGAVKNAQEALEAIETKVPLMLQLLVHEDDDISSNIIGFCYDYLHILKQLPVLSDQQKANVEAIMLAVMKKLTYDEEYNFENEGEDEAMFVEYRKQLKLLLDRLAQVSPELVLASVRRVFSATLQNWQTTRFMEVEVAVRLLYMLAEALPVSHGAHFSGDVSKASALQDMMRTLVTSGVSSYQHTSVTLEFFETVVRYEKFFTVEPQHIPCVLMAFLDHRGLWHSSAKVRSRTAYLFSRFVKSLNKQMNPYIEEILNRIQDLLALSPPENGYQSLLSSDDQLFIYETAGALIVNSEYPAENKQALMKDLLTPLMERFKVLLEKLMMAQDEERQASLADSLNHAVGFASRTSKAFSNKQTVKQCGCSQVYLDCLQTFLPALSCPLQKDVLRSGVRTFLHRMIICLEEEVLPFIPSASEHMLKDCEAKDLQEFIPLINQITAKFKMQVSPFLQQMFMPLLHAIFEVLLRPAEDNDQSAALEKQMLRRSYFAFLQTVTGSGMSEVIANQGAENVEQVLVTIIQGAVDYPDPIAQKTCFIILSKLVELWGGKDGPVGFADFVYKHIVPACFLAPLKQTFDLADAQTVLALSECAVTLKTIHLKRGPECVQYLQQEYLPSLQVAPEIIQEFCQALQQPDAKVFKNYLKVFFQRAKP.

The residue at position 1 (Met1) is an N-acetylmethionine. Lys635 carries the post-translational modification N6-acetyllysine.

This sequence belongs to the exportin family. In terms of assembly, found in a complex with XPOT, Ran and tRNA. Probably found in a complex with nucleoporins. Interacts with Ran and tRNA in a GTP-dependent manner.

Its subcellular location is the nucleus. The protein localises to the cytoplasm. Mediates the nuclear export of aminoacylated tRNAs. In the nucleus binds to tRNA and to the GTPase Ran in its active GTP-bound form. Docking of this trimeric complex to the nuclear pore complex (NPC) is mediated through binding to nucleoporins. Upon transit of a nuclear export complex into the cytoplasm, disassembling of the complex and hydrolysis of Ran-GTP to Ran-GDP (induced by RANBP1 and RANGAP1, respectively) cause release of the tRNA from the export receptor. XPOT then return to the nuclear compartment and mediate another round of transport. The directionality of nuclear export is thought to be conferred by an asymmetric distribution of the GTP- and GDP-bound forms of Ran between the cytoplasm and nucleus. This chain is Exportin-T (Xpot), found in Mus musculus (Mouse).